The chain runs to 145 residues: 3-hydroxyacyl-[acyl-carrier-protein] dehydratase FabZ (145 aa).

The active site involves His49.

This sequence belongs to the thioester dehydratase family. FabZ subfamily.

The protein resides in the cytoplasm. It catalyses the reaction a (3R)-hydroxyacyl-[ACP] = a (2E)-enoyl-[ACP] + H2O. Involved in unsaturated fatty acids biosynthesis. Catalyzes the dehydration of short chain beta-hydroxyacyl-ACPs and long chain saturated and unsaturated beta-hydroxyacyl-ACPs. This Rickettsia felis (strain ATCC VR-1525 / URRWXCal2) (Rickettsia azadi) protein is 3-hydroxyacyl-[acyl-carrier-protein] dehydratase FabZ.